A 510-amino-acid polypeptide reads, in one-letter code: ATP synthase subunit alpha (510 aa).

Position 169-176 (169-176 (GDRQTGKT)) interacts with ATP.

The protein belongs to the ATPase alpha/beta chains family. In terms of assembly, F-type ATPases have 2 components, CF(1) - the catalytic core - and CF(0) - the membrane proton channel. CF(1) has five subunits: alpha(3), beta(3), gamma(1), delta(1), epsilon(1). CF(0) has four main subunits: a(1), b(1), b'(1) and c(9-12).

The protein resides in the cell inner membrane. It carries out the reaction ATP + H2O + 4 H(+)(in) = ADP + phosphate + 5 H(+)(out). Its function is as follows. Produces ATP from ADP in the presence of a proton gradient across the membrane. The alpha chain is a regulatory subunit. This Rhodopseudomonas palustris (strain BisB5) protein is ATP synthase subunit alpha.